Reading from the N-terminus, the 1410-residue chain is MKMLDLYGYTSIAQSFDKICISIASPESIRAMSYGEIKDISTTNYRTFKVEKGGLFCPKIFGPVNDDECLCGKYRKKRYRGVVCEKCGVEVTSSKVRRERMGHIELVSPVAHVWFLKSLPSRIGALLDMPLKLIENILYSGDFVVIDPIATPLSKGEVISESAYNQAKDNYGEDSFLALTGAEAIRELLVRLDLHAINANLRVELESTTSEMKRKKIVKRLRIVENFINSGNKPEWMILTVIPILPPDLRPLVSLENGRPAVSDLNHHYRTIINRNNRLGKLLKLNPPAIMIRNEKRMLQEAVDALFDSTRRSYVSNKAGSVGYKKSLSDMLKGKQGRFRQNLLGKRVDYSGRSVIVVGPNLKLHQCGLPKKMALELFKPFICSKLKMYGIVPTVKLANKMIQNEKPEVWDILDEVIHEHPILLNRAPTLHRLGIQAFDPVLIEGKAIQLHPLVCSAFNADFDGDQMAVHIPLSLEAQLEARILMMSTNNILSPSNGKPIIVPSKDIVLGIYYLTLQDQVQSEDEILFFGDFSHVEYALHNKDVHLCSQIKYRMTYCNYDTSDGKPSYYSKIIETTPGRLILWQIFPQHKNLTFDLINQVLTVKEITSIVDLVYRSCGQSETVEFSDKLMSLGFKYASQSGISFGCKDMIIPDTKTMHVDNASEKIKEFAVQYQDGLITRSERYNKVIDEWSKCTDLIAKDMMKAISVYDVESKLNSIYMMAHSGARGSASQMKQLAGMRGLMAKPSGEIIETPIISNFREGLNVFEYFNSTHGARKGLADTALKTANSGYLTRRLVDVAQDCIVVEYDCKTHNGFAIRSVVEGGTVVETLDNIILGRVAAVDVYNPITEELLVKAGELIDEAKVEKIKIAGLDAVKVRSPLTCEAKKGICALCYGRDLAIGDVVSIGEAVGVIAAQSVGEPGTQLTMRTFHVGGTAMRGVETSNLIALLDAKVKLVNSNIVEDKHGNKIVMSRSCEVVLLDSVGNEKMRHNVPYGARLYVDDGQLVKITEKIAEWDPYTMPIITEKTGIIKYMDLIDGVSINEVLDESTGISNRVVVDWKLHLQGANLRPRLVLIDDNDNIITLSNGLEANYFIPIGAVLNVQDGQKVHAGDVITRIPRDSIKTRDITGGLPRVIELFEARRPKEHAIVSDIDGYVEFGKDYYRSKRRIFIKPVSDTLSPVEYLVPKGKHTIVNEGDFVHKGDLLMDGDPDPHDILRVLGVEALANYMISEIQQVYRLQGVRIDNKHIEIILRQMLQKVEIFEPGDTMYLVGENIDMEEVIKTNDNMVKMGKSPAKYAPILQGITRASLDTNSFVSAASFQETTKVLTEAAFSGKEDSLYGLKENVIVGRLIPAGTGFLMNKIKKLSLLNKEDYSMYYNNEYQDSALLQNDNNAFNQELHKDTGNIVDY.

Zn(2+) is bound by residues Cys69, Cys71, Cys84, and Cys87. Residues Asp461, Asp463, and Asp465 each coordinate Mg(2+). Positions 810, 884, 891, and 894 each coordinate Zn(2+).

It belongs to the RNA polymerase beta' chain family. The RNAP catalytic core consists of 2 alpha, 1 beta, 1 beta' and 1 omega subunit. When a sigma factor is associated with the core the holoenzyme is formed, which can initiate transcription. The cofactor is Mg(2+). It depends on Zn(2+) as a cofactor.

It catalyses the reaction RNA(n) + a ribonucleoside 5'-triphosphate = RNA(n+1) + diphosphate. In terms of biological role, DNA-dependent RNA polymerase catalyzes the transcription of DNA into RNA using the four ribonucleoside triphosphates as substrates. The chain is DNA-directed RNA polymerase subunit beta' from Ehrlichia chaffeensis (strain ATCC CRL-10679 / Arkansas).